A 519-amino-acid polypeptide reads, in one-letter code: Probable cytochrome P450 513D1 (519 aa).

Residues 1–21 (MGISSIIIILFIIVLLKKLIK) form a helical membrane-spanning segment. Cys-464 serves as a coordination point for heme.

It belongs to the cytochrome P450 family. The cofactor is heme.

The protein localises to the membrane. This is Probable cytochrome P450 513D1 (cyp513D1) from Dictyostelium discoideum (Social amoeba).